We begin with the raw amino-acid sequence, 1028 residues long: Multidrug resistance protein MdtC (1028 aa).

Helical transmembrane passes span 3–23 (FFAL…AITL), 333–353 (EVEQ…FLFL), 360–380 (LIPA…MYLC), 387–407 (LSLM…IVVL), 431–451 (VGFT…PLLL), 463–483 (FAVT…TLTP), 528–548 (LVGV…ISIP), 853–873 (VILI…LYES), 875–895 (VHPL…LLAL), 897–917 (LFNA…IGIV), 953–973 (PIMM…ISGG), and 984–1004 (ITIV…TPVV).

It belongs to the resistance-nodulation-cell division (RND) (TC 2.A.6) family. MdtC subfamily. As to quaternary structure, part of a tripartite efflux system composed of MdtA, MdtB and MdtC. MdtC forms a heteromultimer with MdtB.

It is found in the cell inner membrane. The sequence is that of Multidrug resistance protein MdtC from Citrobacter koseri (strain ATCC BAA-895 / CDC 4225-83 / SGSC4696).